The chain runs to 288 residues: Very-long-chain (3R)-3-hydroxyacyl-CoA dehydratase 1 (288 aa).

The tract at residues 1 to 59 is disordered; sequence MGRLTEAAAAGGGASAARSAGPPPAPLPLSSTSPGCAAAMASSEEDGTNGGASEASDER. Over 1-75 the chain is Cytoplasmic; it reads MGRLTEAAAA…RRLGLLATIW (75 aa). The chain crosses the membrane as a helical span at residues 76-95; it reads LTFYNIAMTAGWLVLAIAMV. The Lumenal portion of the chain corresponds to 96 to 114; that stretch reads RFYMEKGTHKGLYKSIQKT. The chain crosses the membrane as a helical span at residues 115–131; the sequence is LKFFQTFALLEIVHCLI. Residues 132-141 are Cytoplasmic-facing; the sequence is GIVPTSVLVA. A helical membrane pass occupies residues 142–159; that stretch reads GVQVSSRIFMVWLVTHSI. Residues 160-165 lie on the Lumenal side of the membrane; it reads KPIQNE. Residues 166–180 traverse the membrane as a helical segment; it reads ESVVLFLVAWTVTEI. The Cytoplasmic segment spans residues 181-203; sequence TRYSFYTFSLLDHLPYFIKWARY. The helical transmembrane segment at 204–221 threads the bilayer; sequence NFFIILYPVGVAGELLTI. Active-site residues include Tyr210 and Glu217. Residues 222–251 are Lumenal-facing; sequence YAALPYVKKTGMFSIRLPNKYNVSFDYYYF. Asn243 carries an N-linked (GlcNAc...) asparagine glycan. Residues 252 to 269 traverse the membrane as a helical segment; it reads LLITMASYIPLFPQLYFH. Over 270 to 288 the chain is Cytoplasmic; sequence MLRQRRKVLHGEVIVEKDD.

This sequence belongs to the very long-chain fatty acids dehydratase HACD family. In terms of assembly, may interact with enzymes of the ELO family (including ELOVL1); with those enzymes that mediate condensation, the first of the four steps of the reaction cycle responsible for fatty acids elongation, may be part of a larger fatty acids elongase complex. Interacts with TECR. In terms of processing, N-glycosylated. In terms of tissue distribution, expressed in heart.

Its subcellular location is the endoplasmic reticulum membrane. It catalyses the reaction a very-long-chain (3R)-3-hydroxyacyl-CoA = a very-long-chain (2E)-enoyl-CoA + H2O. It carries out the reaction (3R)-hydroxyhexadecanoyl-CoA = (2E)-hexadecenoyl-CoA + H2O. The enzyme catalyses (3R)-hydroxyoctadecanoyl-CoA = (2E)-octadecenoyl-CoA + H2O. The catalysed reaction is (3R)-hydroxyeicosanoyl-CoA = (2E)-eicosenoyl-CoA + H2O. It catalyses the reaction (3R)-hydroxydocosanoyl-CoA = (2E)-docosenoyl-CoA + H2O. It carries out the reaction (3R)-hydroxytetracosanoyl-CoA = (2E)-tetracosenoyl-CoA + H2O. The enzyme catalyses (3R)-hydroxyhexacosanoyl-CoA = (2E)-hexacosenoyl-CoA + H2O. Its pathway is lipid metabolism; fatty acid biosynthesis. Its function is as follows. Catalyzes the third of the four reactions of the long-chain fatty acids elongation cycle. This endoplasmic reticulum-bound enzymatic process, allows the addition of two carbons to the chain of long- and very long-chain fatty acids/VLCFAs per cycle. This enzyme catalyzes the dehydration of the 3-hydroxyacyl-CoA intermediate into trans-2,3-enoyl-CoA, within each cycle of fatty acid elongation. Thereby, it participates in the production of VLCFAs of different chain lengths that are involved in multiple biological processes as precursors of membrane lipids and lipid mediators. The polypeptide is Very-long-chain (3R)-3-hydroxyacyl-CoA dehydratase 1 (HACD1) (Ovis aries (Sheep)).